The primary structure comprises 398 residues: 1-deoxy-D-xylulose 5-phosphate reductoisomerase (398 aa).

8 residues coordinate NADPH: Thr-10, Gly-11, Ser-12, Ile-13, Gly-36, Lys-37, Asn-38, and Asn-124. Position 125 (Lys-125) interacts with 1-deoxy-D-xylulose 5-phosphate. Glu-126 is an NADPH binding site. Asp-150 is a Mn(2+) binding site. 4 residues coordinate 1-deoxy-D-xylulose 5-phosphate: Ser-151, Glu-152, Ser-186, and His-209. Residue Glu-152 coordinates Mn(2+). Residue Gly-215 participates in NADPH binding. Positions 222, 227, 228, and 231 each coordinate 1-deoxy-D-xylulose 5-phosphate. Residue Glu-231 participates in Mn(2+) binding.

The protein belongs to the DXR family. Homodimer. Mg(2+) is required as a cofactor. The cofactor is Mn(2+). Co(2+) serves as cofactor.

It catalyses the reaction 2-C-methyl-D-erythritol 4-phosphate + NADP(+) = 1-deoxy-D-xylulose 5-phosphate + NADPH + H(+). The protein operates within isoprenoid biosynthesis; isopentenyl diphosphate biosynthesis via DXP pathway; isopentenyl diphosphate from 1-deoxy-D-xylulose 5-phosphate: step 1/6. Inhibited by fosmidomycin. In terms of biological role, catalyzes the NADPH-dependent rearrangement and reduction of 1-deoxy-D-xylulose-5-phosphate (DXP) to 2-C-methyl-D-erythritol 4-phosphate (MEP). The polypeptide is 1-deoxy-D-xylulose 5-phosphate reductoisomerase (dxr) (Escherichia coli (strain K12)).